The sequence spans 346 residues: Porin Omp2a (346 aa).

The N-terminal stretch at 1-22 (MNIKSLLLGSAAALVAASGAQA) is a signal peptide.

The protein belongs to the alphaproteobacteria porin family. In terms of assembly, monomer.

The protein resides in the cell outer membrane. Its function is as follows. Forms passive diffusion pores that allow small molecular weight hydrophilic materials across the outer membrane. The sequence is that of Porin Omp2a (omp2a) from Brucella ovis.